The primary structure comprises 425 residues: Lipoyl synthase, mitochondrial (425 aa).

The N-terminal 33 residues, 1 to 33 (MAASSTRLRCLYASSSTWKTSPSQSLISLSRRY), are a transit peptide targeting the mitochondrion. A disordered region spans residues 17–55 (TWKTSPSQSLISLSRRYATTSSAPPTPSDESSSTLPKRR). Residues 33 to 51 (YATTSSAPPTPSDESSSTL) are compositionally biased toward polar residues. The [4Fe-4S] cluster site is built by Cys-142, Cys-147, Cys-153, Cys-173, Cys-177, Cys-180, and Ser-388. The 222-residue stretch at 156–377 (GSDKSAATAT…RQRALEMGFL (222 aa)) folds into the Radical SAM core domain.

Belongs to the radical SAM superfamily. Lipoyl synthase family. Requires [4Fe-4S] cluster as cofactor.

The protein localises to the mitochondrion. The catalysed reaction is [[Fe-S] cluster scaffold protein carrying a second [4Fe-4S](2+) cluster] + N(6)-octanoyl-L-lysyl-[protein] + 2 oxidized [2Fe-2S]-[ferredoxin] + 2 S-adenosyl-L-methionine + 4 H(+) = [[Fe-S] cluster scaffold protein] + N(6)-[(R)-dihydrolipoyl]-L-lysyl-[protein] + 4 Fe(3+) + 2 hydrogen sulfide + 2 5'-deoxyadenosine + 2 L-methionine + 2 reduced [2Fe-2S]-[ferredoxin]. Its pathway is protein modification; protein lipoylation via endogenous pathway; protein N(6)-(lipoyl)lysine from octanoyl-[acyl-carrier-protein]: step 2/2. In terms of biological role, catalyzes the radical-mediated insertion of two sulfur atoms into the C-6 and C-8 positions of the octanoyl moiety bound to the lipoyl domains of lipoate-dependent enzymes, thereby converting the octanoylated domains into lipoylated derivatives. This Talaromyces marneffei (strain ATCC 18224 / CBS 334.59 / QM 7333) (Penicillium marneffei) protein is Lipoyl synthase, mitochondrial.